A 176-amino-acid polypeptide reads, in one-letter code: Sigma intracellular receptor 2 (176 aa).

Over 1–9 (MGAPATRRC) the chain is Cytoplasmic. A helical membrane pass occupies residues 10–30 (VEWLLGLYFLSHIPITLFMDL). The EXPERA domain occupies 10–158 (VEWLLGLYFL…PYLLIPFILL (149 aa)). Topologically, residues 31–68 (QAVLPRELYPVEFRNLLKWYAKEFKDPLLQEPPAWFKS) are lumenal. The helical transmembrane segment at 69-89 (FLFCELVFQLPFFPIATYAFL) threads the bilayer. The cholesterol site is built by Val-75 and Gln-77. Residues 90–99 (KGSCKWIRTP) are Cytoplasmic-facing. The chain crosses the membrane as a helical span at residues 100–120 (AIIYSVHTMTTLIPILSTFLF). The tract at residues 108-176 (MTTLIPILST…YKYEEKRKKK (69 aa)) is required for interaction with Hst1/HTN1. Residues 121–140 (EDFSKASGFKGQRPETLHER) are Lumenal-facing. Residues 141 to 161 (LTLVSVYAPYLLIPFILLIFM) traverse the membrane as a helical segment. Residues 162–176 (LRSPYYKYEEKRKKK) lie on the Cytoplasmic side of the membrane. The ER retention motif motif lies at 172 to 176 (KRKKK).

This sequence belongs to the TMEM97/sigma-2 receptor family. In terms of assembly, homodimer. Interacts with NPC1; the interaction impairs NPC1-mediated cholesterol transport. Interacts with PGRMC1 and LDLR; the interaction increases LDL internalization. Interacts with histatin 1/HTN1; the interaction induces HTN1-stimulating wound healing. Interacts with TSPO. Forms a complex with TSPO and PGRMC1; the interaction occurs in MIA PaCa-2 cells but not in MCF7 cells. Widely expressed in normal tissues. Expressed in pancreatic, renal, breast, colon, ovarian surface epithelial (OSE) cells. Highly expressed in various proliferating cancer cells.

It is found in the rough endoplasmic reticulum membrane. The protein resides in the nucleus membrane. Sigma-2 receptor which contributes to ameliorate dysfunctional cellular processes and slow degenerative progression by regulating cell functions including cholesterol biosynthesis/trafficking, membrane trafficking, autophagy, lipid membrane-bound protein trafficking, and receptor stabilization at the cell surface. Forms a ternary complex with PGRMC1 receptor and low density lipoprotein receptor/LDLR at the plasma membrane, which increases LDLR-mediated LDL cholesterol internalization. Decreases lysosomal sterol transporter NPC1 availability to the cell, probably through NPC1-binding, hence controlling lipid transport, including cholesterol and LBPA, outside of late endosome/lysosome. Binds regio- and stereoselective ligand 20(S)-hydroxycholesterol (20(S)-OHC) which enhances TMEM97-NPC1 interaction and decreases TMEM97-PGRMC1 and TMEM97-TSPO interactions, thereby linking OHC binding to cholesterol homeostasis. Also able to bind cholesterol. Binds histatin 1 (Hst 1)/HN1 salivary peptide at the ER membrane, which is critical for increasing mitochondria-ER contacts and stimulating Hst1 wound healing properties. May alter the activity of some cytochrome P450 proteins. Although shows homologies with sterol isomerases (EXPERA domain), not able to catalyze sterol isomerization. However, may act as sensors of these molecules. Acts as a quality control factor in the ER, promoting the proteolytic degradation of nonproductive and extramitochondrial precursor proteins in the ER membrane thus removing them from the ER surface. This is Sigma intracellular receptor 2 from Homo sapiens (Human).